Consider the following 220-residue polypeptide: Protein DGCR6L (220 aa).

A coiled-coil region spans residues 76-159; that stretch reads KSLYNQRLRL…ADQQSTLEKA (84 aa).

It belongs to the gonadal family. As to expression, widely expressed in fetal and adult tissues. Highest expression in liver, heart and skeletal muscle. Lower levels in pancreas and placenta. Weak expression in brain.

Its subcellular location is the nucleus. In terms of biological role, may play a role in neural crest cell migration into the third and fourth pharyngeal pouches. The polypeptide is Protein DGCR6L (DGCR6L) (Homo sapiens (Human)).